We begin with the raw amino-acid sequence, 37 residues long: Large ribosomal subunit protein bL36 (37 aa).

It belongs to the bacterial ribosomal protein bL36 family.

This is Large ribosomal subunit protein bL36 from Magnetococcus marinus (strain ATCC BAA-1437 / JCM 17883 / MC-1).